The chain runs to 208 residues: Probable GTP-binding protein EngB (208 aa).

An EngB-type G domain is found at 23–205 (LTSEMVILGR…RQTLLKYLLT (183 aa)). Residues 31-38 (GRSNVGKS), 57-61 (GKTRL), 84-87 (DLPG), 154-157 (TKFD), and 182-184 (FNA) each bind GTP. Ser-38 and Thr-59 together coordinate Mg(2+).

It belongs to the TRAFAC class TrmE-Era-EngA-EngB-Septin-like GTPase superfamily. EngB GTPase family. It depends on Mg(2+) as a cofactor.

Functionally, necessary for normal cell division and for the maintenance of normal septation. The protein is Probable GTP-binding protein EngB of Helicobacter pylori (strain HPAG1).